Consider the following 750-residue polypeptide: Serine/threonine-protein kinase PknG (750 aa).

Residues 1–66 (MAKASETERS…PQDRMATTSR (66 aa)) are disordered. Polar residues predominate over residues 17-34 (ADAQTATSATVRPLSTQA). The Protein kinase domain occupies 151 to 396 (YEVKGCIAHG…EMSAQLTGVL (246 aa)). ATP-binding positions include 157–165 (IAHGGLGWI) and lysine 181. The active-site Proton acceptor is the aspartate 276.

It belongs to the protein kinase superfamily. Ser/Thr protein kinase family. Post-translationally, autophosphorylated.

It carries out the reaction L-seryl-[protein] + ATP = O-phospho-L-seryl-[protein] + ADP + H(+). It catalyses the reaction L-threonyl-[protein] + ATP = O-phospho-L-threonyl-[protein] + ADP + H(+). The chain is Serine/threonine-protein kinase PknG (pknG) from Mycobacterium bovis (strain ATCC BAA-935 / AF2122/97).